The chain runs to 221 residues: Uridylate kinase (221 aa).

7 to 11 (KISGK) contacts ATP. Glycine 43 contributes to the UMP binding site. ATP-binding residues include glycine 44 and arginine 48. Residues aspartate 62 and 109-115 (LQPGQST) each bind UMP. ATP is bound by residues threonine 135 and tyrosine 141.

It belongs to the UMP kinase family. Homohexamer.

It localises to the cytoplasm. It catalyses the reaction UMP + ATP = UDP + ADP. It participates in pyrimidine metabolism; CTP biosynthesis via de novo pathway; UDP from UMP (UMPK route): step 1/1. With respect to regulation, inhibited by UTP. Functionally, catalyzes the reversible phosphorylation of UMP to UDP. This chain is Uridylate kinase, found in Ignicoccus hospitalis (strain KIN4/I / DSM 18386 / JCM 14125).